Consider the following 271-residue polypeptide: tRNA pseudouridine synthase A (271 aa).

D52 (nucleophile) is an active-site residue. Substrate is bound at residue Y110.

It belongs to the tRNA pseudouridine synthase TruA family. In terms of assembly, homodimer.

It carries out the reaction uridine(38/39/40) in tRNA = pseudouridine(38/39/40) in tRNA. Its function is as follows. Formation of pseudouridine at positions 38, 39 and 40 in the anticodon stem and loop of transfer RNAs. The protein is tRNA pseudouridine synthase A of Burkholderia mallei (strain NCTC 10247).